The following is a 603-amino-acid chain: Adenine deaminase (603 aa).

It belongs to the metallo-dependent hydrolases superfamily. Adenine deaminase family. Homodimer. Mn(2+) is required as a cofactor.

The catalysed reaction is adenine + H2O + H(+) = hypoxanthine + NH4(+). This Klebsiella pneumoniae (strain 342) protein is Adenine deaminase.